An 899-amino-acid chain; its full sequence is Protein translocase subunit SecA (899 aa).

Residues Gln-89, 107–111, and Asp-502 each bind ATP; that span reads GEGKT. The Zn(2+) site is built by Cys-882, Cys-884, Cys-893, and His-894.

Belongs to the SecA family. In terms of assembly, monomer and homodimer. Part of the essential Sec protein translocation apparatus which comprises SecA, SecYEG and auxiliary proteins SecDF-YajC and YidC. Zn(2+) serves as cofactor.

Its subcellular location is the cell inner membrane. It localises to the cytoplasm. It carries out the reaction ATP + H2O + cellular proteinSide 1 = ADP + phosphate + cellular proteinSide 2.. Part of the Sec protein translocase complex. Interacts with the SecYEG preprotein conducting channel. Has a central role in coupling the hydrolysis of ATP to the transfer of proteins into and across the cell membrane, serving both as a receptor for the preprotein-SecB complex and as an ATP-driven molecular motor driving the stepwise translocation of polypeptide chains across the membrane. This is Protein translocase subunit SecA from Allorhizobium ampelinum (strain ATCC BAA-846 / DSM 112012 / S4) (Agrobacterium vitis (strain S4)).